We begin with the raw amino-acid sequence, 189 residues long: Protein jagunal homolog (189 aa).

At 1-34 (MSSRGVRAAGTDGTDFQNRQRVAQHYQESAQYKS) the chain is on the cytoplasmic side. A helical membrane pass occupies residues 35-55 (ILKWFFVPHFLILVFMWLKVG). Residues 56 to 78 (SELLRTNFGWKNAFFDRLDMPSA) are Lumenal-facing. The chain crosses the membrane as a helical span at residues 79–99 (YPWEYVWCFSFIPIVLAIYSF). Topologically, residues 100–105 (QRNKLK) are cytoplasmic. The helical transmembrane segment at 106-126 (ILHYAYYAEFVVGIFPCMIGL) threads the bilayer. At 127–150 (GGQLPELMEYAQDMEGSNTPTFKG) the chain is on the lumenal side. The helical transmembrane segment at 151-171 (IFPMVIIWYIFFAVALQIHGF) threads the bilayer. Topologically, residues 172 to 189 (SMYFMHHLAAAWAPVKRD) are cytoplasmic.

Belongs to the jagunal family.

It is found in the endoplasmic reticulum membrane. The chain is Protein jagunal homolog from Caenorhabditis elegans.